The chain runs to 614 residues: Laccase 1 (614 aa).

Positions 1-21 are cleaved as a signal peptide; that stretch reads MSRFARLLLMVVALFFTNAWA. 2 consecutive Plastocyanin-like domains span residues 30–143 and 172–360; these read ITWK…IRPK and YLVV…MRIP. An N-linked (GlcNAc...) asparagine glycan is attached at asparagine 75. Cu cation-binding residues include histidine 79, histidine 81, histidine 123, and histidine 125. Asparagine 257, asparagine 280, asparagine 445, asparagine 469, and asparagine 485 each carry an N-linked (GlcNAc...) asparagine glycan. The Plastocyanin-like 3 domain maps to 469 to 599; it reads NATRDTENDG…GGMGIAILDG (131 aa). Cu cation-binding residues include histidine 507, histidine 510, and histidine 512. A glycan (N-linked (GlcNAc...) asparagine) is linked at asparagine 527. Positions 581, 582, 583, and 587 each coordinate Cu cation.

The protein belongs to the multicopper oxidase family. Cu cation serves as cofactor.

It localises to the cell surface. It functions in the pathway pigment biosynthesis. Its function is as follows. Laccase; part of the Pks1 gene cluster that mediates the biosynthesis of an anthraquinone derivative pigment that contributes to conidial pigmentation that provides protection from UV radiation, heat and cold stress. The polyketide synthase Pks1 produces 1-acetyl-2,4,6,8-tetrahydroxy-9,10-anthraquinone though condensation of acetyl-CoA with malonyl-CoA. The dehydratase EthD and the laccase Mlac1 further convert the anthraquinone derivative into the final conidial pigment. The protein is Laccase 1 of Metarhizium majus (strain ARSEF 297).